A 729-amino-acid chain; its full sequence is Fatty acid oxidation complex subunit alpha (729 aa).

The enoyl-CoA hydratase/isomerase stretch occupies residues 1–189; the sequence is MLYKGDTLYL…KVGLVDAVVK (189 aa). Asp296 is a substrate binding site. The tract at residues 311 to 729 is 3-hydroxyacyl-CoA dehydrogenase; it reads ETPKQAAVLG…AQPVGELQTA (419 aa). Residues Met324, Asp343, 400-402, Lys407, and Ser429 each bind NAD(+); that span reads VVE. His450 (for 3-hydroxyacyl-CoA dehydrogenase activity) is an active-site residue. NAD(+) is bound at residue Asn453. Substrate is bound by residues Asn500 and Tyr660. Residues 708-729 are disordered; the sequence is SHNAPYYPQVEPAQPVGELQTA.

This sequence in the N-terminal section; belongs to the enoyl-CoA hydratase/isomerase family. The protein in the C-terminal section; belongs to the 3-hydroxyacyl-CoA dehydrogenase family. As to quaternary structure, heterotetramer of two alpha chains (FadB) and two beta chains (FadA).

The catalysed reaction is a (3S)-3-hydroxyacyl-CoA + NAD(+) = a 3-oxoacyl-CoA + NADH + H(+). The enzyme catalyses a (3S)-3-hydroxyacyl-CoA = a (2E)-enoyl-CoA + H2O. It catalyses the reaction a 4-saturated-(3S)-3-hydroxyacyl-CoA = a (3E)-enoyl-CoA + H2O. It carries out the reaction (3S)-3-hydroxybutanoyl-CoA = (3R)-3-hydroxybutanoyl-CoA. The catalysed reaction is a (3Z)-enoyl-CoA = a 4-saturated (2E)-enoyl-CoA. The enzyme catalyses a (3E)-enoyl-CoA = a 4-saturated (2E)-enoyl-CoA. The protein operates within lipid metabolism; fatty acid beta-oxidation. In terms of biological role, involved in the aerobic and anaerobic degradation of long-chain fatty acids via beta-oxidation cycle. Catalyzes the formation of 3-oxoacyl-CoA from enoyl-CoA via L-3-hydroxyacyl-CoA. It can also use D-3-hydroxyacyl-CoA and cis-3-enoyl-CoA as substrate. The polypeptide is Fatty acid oxidation complex subunit alpha (Cronobacter sakazakii (strain ATCC BAA-894) (Enterobacter sakazakii)).